Here is a 91-residue protein sequence, read N- to C-terminus: Small ribosomal subunit protein uS17 (91 aa).

The protein belongs to the universal ribosomal protein uS17 family. Part of the 30S ribosomal subunit.

Its function is as follows. One of the primary rRNA binding proteins, it binds specifically to the 5'-end of 16S ribosomal RNA. The chain is Small ribosomal subunit protein uS17 from Saccharopolyspora erythraea (strain ATCC 11635 / DSM 40517 / JCM 4748 / NBRC 13426 / NCIMB 8594 / NRRL 2338).